The primary structure comprises 253 residues: Tryptophan synthase alpha chain (253 aa).

Catalysis depends on proton acceptor residues E45 and D56.

This sequence belongs to the TrpA family. As to quaternary structure, tetramer of two alpha and two beta chains.

The enzyme catalyses (1S,2R)-1-C-(indol-3-yl)glycerol 3-phosphate + L-serine = D-glyceraldehyde 3-phosphate + L-tryptophan + H2O. It participates in amino-acid biosynthesis; L-tryptophan biosynthesis; L-tryptophan from chorismate: step 5/5. Functionally, the alpha subunit is responsible for the aldol cleavage of indoleglycerol phosphate to indole and glyceraldehyde 3-phosphate. The chain is Tryptophan synthase alpha chain from Flavobacterium johnsoniae (strain ATCC 17061 / DSM 2064 / JCM 8514 / BCRC 14874 / CCUG 350202 / NBRC 14942 / NCIMB 11054 / UW101) (Cytophaga johnsonae).